Reading from the N-terminus, the 963-residue chain is Protein bicaudal C homolog 1-A (963 aa).

Positions 1–48 (MAAQCESIGGDMNQSDPGSNSERSADSPVPGSEDDSPHDPEWREERFR) are disordered. Positions 12–22 (MNQSDPGSNSE) are enriched in polar residues. Basic and acidic residues predominate over residues 35 to 48 (DSPHDPEWREERFR). 2 consecutive KH domains span residues 128-195 (RVTL…RVRI) and 280-344 (PVST…RQYL). A compositionally biased stretch (polar residues) spans 592 to 601 (EASRQSNNHS). 3 disordered regions span residues 592–613 (EASR…TDPE), 668–713 (ERLL…TSQS), and 767–834 (LRRA…NKSA). 2 stretches are compositionally biased toward basic and acidic residues: residues 602–612 (SAEEVNSKTDP) and 683–696 (VTDK…RAAE). Positions 784 to 797 (ENSSLSRSNSREQL) are enriched in low complexity. Polar residues predominate over residues 812-824 (IDSSQNDYSSSIG). The SAM domain occupies 862-925 (FKGSDLPELF…LLAISELNKN (64 aa)).

It belongs to the BicC family.

Its function is as follows. Putative RNA-binding protein. May be involved in regulating gene expression during embryonic development. Seems to be involved in endoderm formation. Ectopic expression results in endoderm formation in the absence of mesoderm induction. The polypeptide is Protein bicaudal C homolog 1-A (bicc1-a) (Xenopus laevis (African clawed frog)).